A 132-amino-acid chain; its full sequence is Small ribosomal subunit protein uS8 (132 aa).

Belongs to the universal ribosomal protein uS8 family. In terms of assembly, part of the 30S ribosomal subunit. Contacts proteins S5 and S12.

In terms of biological role, one of the primary rRNA binding proteins, it binds directly to 16S rRNA central domain where it helps coordinate assembly of the platform of the 30S subunit. This Rickettsia rickettsii (strain Sheila Smith) protein is Small ribosomal subunit protein uS8.